The sequence spans 596 residues: Ulvan-active sulfatase (596 aa).

The signal sequence occupies residues 1-27; the sequence is MLFLRFKFFNNRLLFVSVLCFVICVSC. 5 residues coordinate Ca(2+): Glu58, Asp59, Cys97, Asp306, and His307. Cys97 serves as the catalytic Nucleophile. Cys97 is subject to 3-oxoalanine (Cys).

It belongs to the sulfatase family. Ca(2+) serves as cofactor. Post-translationally, the conversion to 3-oxoalanine (also known as C-formylglycine, FGly), of a serine or cysteine residue in prokaryotes and of a cysteine residue in eukaryotes, is critical for catalytic activity.

The protein resides in the periplasm. Sulfatase involved in ulvan degradation. Ulvan is the main polysaccharide component of the Ulvales (green seaweed) cell wall. It is composed of disaccharide building blocks comprising 3-sulfated rhamnose (Rha3S) linked to D-glucuronic acid (GlcA), L-iduronic acid (IduA), or D-xylose (Xyl). The sulfatase desulfates Xyl2S-Rha3S, product of the degradation of ulvan by endo-acting alpha-1,4-L-rhamnosidase, to Xyl-Rha3S. The protein is Ulvan-active sulfatase of Formosa agariphila (strain DSM 15362 / KCTC 12365 / LMG 23005 / KMM 3901 / M-2Alg 35-1).